A 276-amino-acid polypeptide reads, in one-letter code: Formamidopyrimidine-DNA glycosylase (276 aa).

The active-site Schiff-base intermediate with DNA is P2. Residue E3 is the Proton donor of the active site. The active-site Proton donor; for beta-elimination activity is K60. H93 and R112 together coordinate DNA. Residues 240–274 (NVYGKKGEPCVTCGTILEKTVVGGRGTHYCPICQP) form an FPG-type zinc finger. R264 (proton donor; for delta-elimination activity) is an active-site residue.

This sequence belongs to the FPG family. As to quaternary structure, monomer. It depends on Zn(2+) as a cofactor.

The enzyme catalyses Hydrolysis of DNA containing ring-opened 7-methylguanine residues, releasing 2,6-diamino-4-hydroxy-5-(N-methyl)formamidopyrimidine.. It carries out the reaction 2'-deoxyribonucleotide-(2'-deoxyribose 5'-phosphate)-2'-deoxyribonucleotide-DNA = a 3'-end 2'-deoxyribonucleotide-(2,3-dehydro-2,3-deoxyribose 5'-phosphate)-DNA + a 5'-end 5'-phospho-2'-deoxyribonucleoside-DNA + H(+). Involved in base excision repair of DNA damaged by oxidation or by mutagenic agents. Acts as a DNA glycosylase that recognizes and removes damaged bases. Has a preference for oxidized purines, such as 7,8-dihydro-8-oxoguanine (8-oxoG). Has AP (apurinic/apyrimidinic) lyase activity and introduces nicks in the DNA strand. Cleaves the DNA backbone by beta-delta elimination to generate a single-strand break at the site of the removed base with both 3'- and 5'-phosphates. The chain is Formamidopyrimidine-DNA glycosylase from Bacillus cereus (strain ATCC 14579 / DSM 31 / CCUG 7414 / JCM 2152 / NBRC 15305 / NCIMB 9373 / NCTC 2599 / NRRL B-3711).